We begin with the raw amino-acid sequence, 75 residues long: MSSGGLLLLLGLLTLWAELTPVSGQDRPKKPGLCPPRPQKPPCVKECKNDWSCPGQQKCCSYGCIDECRDPIFVN.

Residues 1–24 (MSSGGLLLLLGLLTLWAELTPVSG) form the signal peptide. The 46-residue stretch at 27-72 (RPKKPGLCPPRPQKPPCVKECKNDWSCPGQQKCCSYGCIDECRDPI) folds into the WAP domain. 4 disulfides stabilise this stretch: C34-C60, C43-C64, C47-C59, and C53-C68.

This sequence belongs to the venom waprin family. Expressed by the venom gland.

The protein localises to the secreted. Damages membranes of susceptible bacteria. Has no hemolytic activity. Not toxic to mice. Does not inhibit the proteinases elastase and cathepsin G. This is Scuwaprin-a from Oxyuranus scutellatus scutellatus (Australian taipan).